A 90-amino-acid chain; its full sequence is Small ribosomal subunit protein bS20 (90 aa).

This sequence belongs to the bacterial ribosomal protein bS20 family.

Its function is as follows. Binds directly to 16S ribosomal RNA. The chain is Small ribosomal subunit protein bS20 from Fusobacterium nucleatum subsp. nucleatum (strain ATCC 25586 / DSM 15643 / BCRC 10681 / CIP 101130 / JCM 8532 / KCTC 2640 / LMG 13131 / VPI 4355).